The chain runs to 413 residues: uncharacterized protein (413 aa).

This is an uncharacterized protein from Mycobacterium tuberculosis (strain CDC 1551 / Oshkosh).